The primary structure comprises 1040 residues: Contactin-2 (1040 aa).

Residues 1-30 form the signal peptide; it reads MGTHARKKASLLLLVLATVALVSSPGWSFA. Ig-like C2-type domains are found at residues 39–130, 135–224, 241–324, 329–413, 419–506, and 511–605; these read PIFE…AVLR, QEFS…SVFS, PSIK…GRII, PEWL…AELA, PDFR…GILS, and TKIT…ATVL. Disulfide bonds link Cys-63–Cys-113, Cys-157–Cys-209, Cys-263–Cys-308, and Cys-350–Cys-397. Asn-78, Asn-200, and Asn-206 each carry an N-linked (GlcNAc...) asparagine glycan. 4 N-linked (GlcNAc...) asparagine glycosylation sites follow: Asn-463, Asn-479, Asn-500, and Asn-527. 4 Fibronectin type-III domains span residues 612–710, 715–812, 817–913, and 917–1008; these read PPGG…TKEA, APSG…SAEE, APAK…VKPP, and PPGN…NGGT. Asn-777 is a glycosylation site (N-linked (GlcNAc...) asparagine). The Cell attachment site signature appears at 796-798; that stretch reads RGD. N-linked (GlcNAc...) asparagine glycosylation is found at Asn-832, Asn-920, and Asn-942. The segment at 895–921 is disordered; that stretch reads RAGTGPASPSADAMTVKPPPRRPPGNI. Ala-1015 carries GPI-anchor amidated alanine lipidation. The propeptide at 1016–1040 is removed in mature form; that stretch reads AARPAHPGPAFSCMVILMLAGYQKL.

The protein belongs to the immunoglobulin superfamily. Contactin family. In neural tissues in embryos, and in adult brain, spinal cord and cerebellum.

The protein resides in the cell membrane. May play a role in the initial growth and guidance of axons. May be involved in cell adhesion. In conjunction with another transmembrane protein, CNTNAP2, contributes to the organization of axonal domains at nodes of Ranvier by maintaining voltage-gated potassium channels at the juxtaparanodal region. The chain is Contactin-2 (Cntn2) from Rattus norvegicus (Rat).